Reading from the N-terminus, the 82-residue chain is Turripeptide IX-04 (82 aa).

The signal sequence occupies residues 1–21 (MGFYMLLTVALLLTSLMNVEA). Positions 22–39 (TPVDQAERSALEKSGLGN) are excised as a propeptide. Intrachain disulfides connect cysteine 48/cysteine 70, cysteine 55/cysteine 74, and cysteine 60/cysteine 81.

As to expression, expressed by the venom duct.

Its subcellular location is the secreted. This is Turripeptide IX-04 from Gemmula speciosa (Splendid gem-turris).